The chain runs to 321 residues: Putative membrane-bound redox modulator Alx (321 aa).

Topologically, residues Met1 to Thr6 are periplasmic. A helical membrane pass occupies residues Pro7–Leu27. At Gln28 to Ala43 the chain is on the cytoplasmic side. Residues Trp44–Val64 traverse the membrane as a helical segment. The Periplasmic segment spans residues Gln65–Leu89. The chain crosses the membrane as a helical span at residues Ala90–Leu110. Topologically, residues Gln111–Arg113 are cytoplasmic. Residues Val114–Ser134 traverse the membrane as a helical segment. Trp135 is a topological domain (periplasmic). The helical transmembrane segment at Leu136 to Val156 threads the bilayer. The Cytoplasmic segment spans residues Lys157 to Gly198. Residues Leu199–Phe219 form a helical membrane-spanning segment. Residues Ala220–Pro225 are Periplasmic-facing. A helical transmembrane segment spans residues Ala226–Leu246. The Cytoplasmic segment spans residues Gly247–Arg261. A helical membrane pass occupies residues Phe262–Ile282. Topologically, residues Val283–Tyr286 are periplasmic. The helical transmembrane segment at His287–Ile307 threads the bilayer. Topologically, residues Asn308–Gly321 are cytoplasmic.

Belongs to the TerC family.

Its subcellular location is the cell inner membrane. In terms of biological role, has been proposed to be a redox modulator. The protein is Putative membrane-bound redox modulator Alx of Escherichia coli (strain K12).